A 122-amino-acid chain; its full sequence is Large ribosomal subunit protein uL14c (122 aa).

Belongs to the universal ribosomal protein uL14 family. In terms of assembly, part of the 50S ribosomal subunit.

Its subcellular location is the plastid. The protein resides in the chloroplast. In terms of biological role, binds to 23S rRNA. The polypeptide is Large ribosomal subunit protein uL14c (Lemna minor (Common duckweed)).